Consider the following 995-residue polypeptide: Endosome/lysosome-associated apoptosis and autophagy regulator family member 2 (995 aa).

An N-terminal signal peptide occupies residues 1 to 21 (MGVFCWSGCLVISLQLLLGAA). Residues 22–895 (LDNLSTCKEE…ACESIDFWLK (874 aa)) are Extracellular-facing. N-linked (GlcNAc...) asparagine glycans are attached at residues asparagine 24, asparagine 136, asparagine 245, asparagine 372, asparagine 527, asparagine 649, asparagine 683, asparagine 700, and asparagine 758. The MRH domain maps to 639–843 (SECLVTYTNE…LWETAEACPL (205 aa)). 2 disulfide bridges follow: cysteine 641-cysteine 687 and cysteine 697-cysteine 725. 2 cysteine pairs are disulfide-bonded: cysteine 793–cysteine 829 and cysteine 805–cysteine 841. A glycan (N-linked (GlcNAc...) asparagine) is linked at asparagine 883. The helical transmembrane segment at 896-916 (VGAGVGAFTAVLLIALTCYFW) threads the bilayer. Topologically, residues 917-995 (KKNQKLEYKY…QLKSSRAQNI (79 aa)) are cytoplasmic.

It belongs to the ELAPOR family. In terms of tissue distribution, expressed in the animal half of the embryo during gastrulation, becoming restricted to the ventral ectoderm at stage 12.5. At the neurula stage, expressed in the anterior ectoderm surrounding the neural plate, and weakly in the epidermis. Expression is especially high in the presumptive hatching gland and cement gland regions. Surprisingly, by the tailbud stage (stage 22), expression is limited to the hatching gland and is not seen in the cement gland. Conversely, in tadpoles expressed broadly in the head, heart and fin. Expression in the head is seen in the primary mouth and in the brain, eyes, otic vesicles and olfactory pits.

It localises to the cell membrane. In terms of biological role, functions as a regulator of the BMP signaling pathway and is involved in epidermal differentiation. This Xenopus laevis (African clawed frog) protein is Endosome/lysosome-associated apoptosis and autophagy regulator family member 2 (elapor2).